Here is a 58-residue protein sequence, read N- to C-terminus: MVRWMFIFLALALVSAVLGFSGIAGAAAAVAQVIFYLFLLSLIVSIVFVILGKKNVNR.

The next 2 helical transmembrane spans lie at 4 to 24 (WMFI…SGIA) and 30 to 50 (VAQV…VFVI).

The protein belongs to the UPF0391 family.

The protein localises to the cell membrane. The sequence is that of UPF0391 membrane protein VP0082 from Vibrio parahaemolyticus serotype O3:K6 (strain RIMD 2210633).